We begin with the raw amino-acid sequence, 355 residues long: Peptide chain release factor 1 (355 aa).

Q233 carries the post-translational modification N5-methylglutamine.

Belongs to the prokaryotic/mitochondrial release factor family. In terms of processing, methylated by PrmC. Methylation increases the termination efficiency of RF1.

The protein resides in the cytoplasm. Peptide chain release factor 1 directs the termination of translation in response to the peptide chain termination codons UAG and UAA. This is Peptide chain release factor 1 from Bacillus cereus (strain ATCC 14579 / DSM 31 / CCUG 7414 / JCM 2152 / NBRC 15305 / NCIMB 9373 / NCTC 2599 / NRRL B-3711).